The sequence spans 93 residues: Small ribosomal subunit protein uS19 (93 aa).

It belongs to the universal ribosomal protein uS19 family.

Its function is as follows. Protein S19 forms a complex with S13 that binds strongly to the 16S ribosomal RNA. This Frankia casuarinae (strain DSM 45818 / CECT 9043 / HFP020203 / CcI3) protein is Small ribosomal subunit protein uS19.